The primary structure comprises 69 residues: DNA gyrase inhibitor YacG (69 aa).

Zn(2+) contacts are provided by cysteine 7, cysteine 10, cysteine 26, and cysteine 30.

The protein belongs to the DNA gyrase inhibitor YacG family. As to quaternary structure, interacts with GyrB. Requires Zn(2+) as cofactor.

Inhibits all the catalytic activities of DNA gyrase by preventing its interaction with DNA. Acts by binding directly to the C-terminal domain of GyrB, which probably disrupts DNA binding by the gyrase. This chain is DNA gyrase inhibitor YacG, found in Shewanella baltica (strain OS195).